The chain runs to 202 residues: Imidazoleglycerol-phosphate dehydratase (202 aa).

The protein belongs to the imidazoleglycerol-phosphate dehydratase family.

The protein localises to the cytoplasm. The catalysed reaction is D-erythro-1-(imidazol-4-yl)glycerol 3-phosphate = 3-(imidazol-4-yl)-2-oxopropyl phosphate + H2O. The protein operates within amino-acid biosynthesis; L-histidine biosynthesis; L-histidine from 5-phospho-alpha-D-ribose 1-diphosphate: step 6/9. This Synechococcus sp. (strain CC9605) protein is Imidazoleglycerol-phosphate dehydratase.